Here is a 520-residue protein sequence, read N- to C-terminus: Glucose-1-phosphate adenylyltransferase small subunit, chloroplastic (520 aa).

A chloroplast-targeting transit peptide spans 1 to 71 (MATMAAIGSL…RTPSIVSPKA (71 aa)). Residues 1-81 (MATMAAIGSL…VSDSQNSQTC (81 aa)) are disordered. Positions 14 to 27 (SSSSNHTRRLSSSS) are enriched in low complexity. A compositionally biased stretch (polar residues) spans 28–51 (QRKTLSFSSSSLTGEKLNPTQEII).

Belongs to the bacterial/plant glucose-1-phosphate adenylyltransferase family. In terms of assembly, heterotetramer. As to expression, leaves.

The protein resides in the plastid. The protein localises to the chloroplast. It carries out the reaction alpha-D-glucose 1-phosphate + ATP + H(+) = ADP-alpha-D-glucose + diphosphate. It participates in glycan biosynthesis; starch biosynthesis. Activated by 3'phosphoglycerate, inhibited by orthophosphate. Allosteric regulation. Its function is as follows. This protein plays a role in synthesis of starch. It catalyzes the synthesis of the activated glycosyl donor, ADP-glucose from Glc-1-P and ATP. The polypeptide is Glucose-1-phosphate adenylyltransferase small subunit, chloroplastic (AGPS1) (Brassica napus (Rape)).